Consider the following 547-residue polypeptide: Sodium-coupled neutral amino acid transporter 4 (547 aa).

The Extracellular portion of the chain corresponds to 1 to 104; it reads MDPIELRSVN…GLSYAMANTG (104 aa). Ser49 is subject to Phosphoserine. Residues 105–125 traverse the membrane as a helical segment; that stretch reads IVLFVIMLLTVAILSLYSVHL. At 126-151 the chain is on the cytoplasmic side; sequence LLKTAKEGGSLIYEKLGEKAFGWPGK. Residues 152–172 form a helical membrane-spanning segment; sequence IGAFISITMQNIGAMSSYLFI. Residues 173–195 are Extracellular-facing; sequence IKYELPEVIRVFMGLEENTGEWY. The helical transmembrane segment at 196–216 threads the bilayer; it reads LNGNYLVLFVSVGIILPLSLL. The Cytoplasmic segment spans residues 217–220; it reads KNLG. The helical transmembrane segment at 221–241 threads the bilayer; it reads YLGYTSGFSLTCMVFFVSVVI. Residues 242-332 lie on the Extracellular side of the membrane; the sequence is YKKFQIPCPL…PKYFVFNSRT (91 aa). Residues Cys249 and Cys321 are joined by a disulfide bond. N-linked (GlcNAc...) asparagine glycosylation is found at Asn260, Asn264, and Asn276. The chain crosses the membrane as a helical span at residues 333-353; it reads AYAIPILAFAFVCHPEVLPIY. The Cytoplasmic portion of the chain corresponds to 354–369; sequence SELKDRSRRKMQTVSN. A helical membrane pass occupies residues 370-390; that stretch reads ISITGMLVMYLLAALFGYLSF. Residues 391 to 411 are Extracellular-facing; sequence YGEVEDELLHAYSKVYTFDTA. A helical membrane pass occupies residues 412–432; the sequence is LLMVRLAVLVAVTLTVPIVLF. Over 433–453 the chain is Cytoplasmic; that stretch reads PIRTSVITLLFPRRPFSWVKH. The chain crosses the membrane as a helical span at residues 454 to 474; sequence FGIAAIIIALNNVLVILVPTI. The Extracellular portion of the chain corresponds to 475 to 476; it reads KY. A helical membrane pass occupies residues 477–497; that stretch reads IFGFIGASSATMLIFILPAAF. Residues 498 to 514 lie on the Cytoplasmic side of the membrane; it reads YLKLVKKEPLRSPQKIG. A helical transmembrane segment spans residues 515–535; it reads ALVFLVTGIIFMMGSMALIII. The Extracellular portion of the chain corresponds to 536 to 547; that stretch reads DWIYNPPNPDHH.

It belongs to the amino acid/polyamine transporter 2 family. The disulfide bond plays an important role in substrate transport, but has no effect on trafficking to the cell surface. Expressed predominantly in liver, and at lower level in skeletal muscle.

The protein localises to the cell membrane. The protein resides in the cell projection. It is found in the microvillus membrane. It carries out the reaction L-alanine(in) + Na(+)(in) = L-alanine(out) + Na(+)(out). The catalysed reaction is L-serine(in) + Na(+)(in) = L-serine(out) + Na(+)(out). The enzyme catalyses glycine(in) + Na(+)(in) = glycine(out) + Na(+)(out). It catalyses the reaction L-cysteine(in) + Na(+)(in) = L-cysteine(out) + Na(+)(out). It carries out the reaction L-asparagine(in) + Na(+)(in) = L-asparagine(out) + Na(+)(out). The catalysed reaction is L-threonine(in) + Na(+)(in) = L-threonine(out) + Na(+)(out). The enzyme catalyses L-proline(in) + Na(+)(in) = L-proline(out) + Na(+)(out). It catalyses the reaction L-methionine(in) + Na(+)(in) = L-methionine(out) + Na(+)(out). It carries out the reaction L-glutamine(in) + Na(+)(in) = L-glutamine(out) + Na(+)(out). The catalysed reaction is L-histidine(in) + Na(+)(in) = L-histidine(out) + Na(+)(out). Symporter that cotransports neutral amino acids and sodium ions from the extraccellular to the intracellular side of the cell membrane. The transport is electrogenic, pH dependent and partially tolerates substitution of Na(+) by Li(+). Preferentially transports smaller amino acids, such as glycine, L-alanine, L-serine, L-asparagine and L-threonine, followed by L-cysteine, L-histidine, L-proline and L-glutamine and L-methionine. In Rattus norvegicus (Rat), this protein is Sodium-coupled neutral amino acid transporter 4.